A 240-amino-acid polypeptide reads, in one-letter code: Large ribosomal subunit protein uL3 (240 aa).

Disordered stretches follow at residues 139–164 (VSHR…KMPG) and 215–240 (DAPK…QEGV). N5-methylglutamine is present on glutamine 151. Positions 225 to 240 (ADGGEQAAPAAEQEGV) are enriched in low complexity.

The protein belongs to the universal ribosomal protein uL3 family. In terms of assembly, part of the 50S ribosomal subunit. Forms a cluster with proteins L14 and L19. Methylated by PrmB.

In terms of biological role, one of the primary rRNA binding proteins, it binds directly near the 3'-end of the 23S rRNA, where it nucleates assembly of the 50S subunit. The chain is Large ribosomal subunit protein uL3 from Rhodopseudomonas palustris (strain BisA53).